The following is a 424-amino-acid chain: Light-independent protochlorophyllide reductase subunit N (424 aa).

Residues C26, C51, and C112 each coordinate [4Fe-4S] cluster.

Belongs to the BchN/ChlN family. As to quaternary structure, protochlorophyllide reductase is composed of three subunits; BchL, BchN and BchB. Forms a heterotetramer of two BchB and two BchN subunits. [4Fe-4S] cluster is required as a cofactor.

The catalysed reaction is chlorophyllide a + oxidized 2[4Fe-4S]-[ferredoxin] + 2 ADP + 2 phosphate = protochlorophyllide a + reduced 2[4Fe-4S]-[ferredoxin] + 2 ATP + 2 H2O. Its pathway is porphyrin-containing compound metabolism; bacteriochlorophyll biosynthesis (light-independent). Component of the dark-operative protochlorophyllide reductase (DPOR) that uses Mg-ATP and reduced ferredoxin to reduce ring D of protochlorophyllide (Pchlide) to form chlorophyllide a (Chlide). This reaction is light-independent. The NB-protein (BchN-BchB) is the catalytic component of the complex. This chain is Light-independent protochlorophyllide reductase subunit N, found in Rhodobacter capsulatus (strain ATCC BAA-309 / NBRC 16581 / SB1003).